We begin with the raw amino-acid sequence, 162 residues long: MSSNLCPIYSSFFGFAGVCASMVFSCLGAGYGTALAGRGIAAVGAFRPEIVMKSLIPVVMSGIIGVYGLVMSVLIAGDMSPDNDYSLFSGFIHLSAGLAVGLTGVAAGYAIGVVGDRGVQSFMRQDRIFVSMVLILIFAEVLGLYGLIVGLILQTKTSNVCY.

Residues Met-1–Ser-11 are Lumenal-facing. A helical membrane pass occupies residues Phe-12–Gly-32. The Cytoplasmic segment spans residues Thr-33 to Ser-54. The chain crosses the membrane as a helical span at residues Leu-55–Ile-75. At Ala-76–His-93 the chain is on the lumenal side. The helical transmembrane segment at Leu-94 to Val-114 threads the bilayer. At Gly-115 to Met-132 the chain is on the cytoplasmic side. The helical transmembrane segment at Val-133–Leu-153 threads the bilayer. Over Gln-154–Tyr-162 the chain is Lumenal.

The protein belongs to the V-ATPase proteolipid subunit family. In terms of assembly, V-ATPase is a heteromultimeric enzyme composed of a peripheral catalytic V1 complex (components A to H) attached to an integral membrane V0 proton pore complex (components: a, c, c', c'', d, e, f and VOA1). The decameric c-ring forms the proton-conducting pore, and is composed of eight proteolipid subunits c, one subunit c' and one subunit c''.

It localises to the vacuole membrane. In terms of biological role, proton-conducting pore forming subunit of the V0 complex of vacuolar(H+)-ATPase (V-ATPase), a multisubunit enzyme composed of a peripheral complex (V1) that hydrolyzes ATP and a membrane integral complex (V0) that translocates protons. V-ATPase is responsible for acidifying and maintaining the pH of intracellular compartments. In Schizosaccharomyces pombe (strain 972 / ATCC 24843) (Fission yeast), this protein is V-type proton ATPase subunit c'.